Reading from the N-terminus, the 413-residue chain is Aminopeptidase PepS (413 aa).

A divalent metal cation is bound by residues E253, E319, E343, H348, H381, and D383.

This sequence belongs to the peptidase M29 family. As to quaternary structure, monomer. It depends on Co(2+) as a cofactor. Zn(2+) is required as a cofactor. Mg(2+) serves as cofactor.

Its function is as follows. Exhibits a high specificity towards peptides possessing arginine or aromatic amino acids at the N-terminus. Could be involved both in bacterial growth by supplying amino acids. In Streptococcus thermophilus, this protein is Aminopeptidase PepS (pepS).